We begin with the raw amino-acid sequence, 54 residues long: Large ribosomal subunit protein bL33A (54 aa).

Belongs to the bacterial ribosomal protein bL33 family.

The sequence is that of Large ribosomal subunit protein bL33A (rpmG1) from Mycobacterium bovis (strain ATCC BAA-935 / AF2122/97).